Consider the following 1524-residue polypeptide: DNA-directed RNA polymerase subunit beta' (1524 aa).

Residues Cys-58, Cys-60, Cys-73, and Cys-76 each contribute to the Zn(2+) site. Positions 739, 741, and 743 each coordinate Mg(2+). Zn(2+)-binding residues include Cys-1112, Cys-1194, Cys-1201, and Cys-1204. Residues 1501–1524 (EAVEAKERPAARRGVKREQPGKQA) are disordered.

The protein belongs to the RNA polymerase beta' chain family. As to quaternary structure, the RNAP catalytic core consists of 2 alpha, 1 beta, 1 beta' and 1 omega subunit. When a sigma factor is associated with the core the holoenzyme is formed, which can initiate transcription. Mg(2+) is required as a cofactor. It depends on Zn(2+) as a cofactor.

It carries out the reaction RNA(n) + a ribonucleoside 5'-triphosphate = RNA(n+1) + diphosphate. Functionally, DNA-dependent RNA polymerase catalyzes the transcription of DNA into RNA using the four ribonucleoside triphosphates as substrates. The sequence is that of DNA-directed RNA polymerase subunit beta' from Thermus thermophilus (strain ATCC BAA-163 / DSM 7039 / HB27).